Consider the following 542-residue polypeptide: Chaperonin GroEL (542 aa).

ATP contacts are provided by residues 29–32 (TLGP), Lys50, 86–90 (DGTTT), Gly414, and Asp494.

Belongs to the chaperonin (HSP60) family. As to quaternary structure, forms a cylinder of 14 subunits composed of two heptameric rings stacked back-to-back. Interacts with the co-chaperonin GroES.

It localises to the cytoplasm. It catalyses the reaction ATP + H2O + a folded polypeptide = ADP + phosphate + an unfolded polypeptide.. In terms of biological role, together with its co-chaperonin GroES, plays an essential role in assisting protein folding. The GroEL-GroES system forms a nano-cage that allows encapsulation of the non-native substrate proteins and provides a physical environment optimized to promote and accelerate protein folding. In Cytophaga hutchinsonii (strain ATCC 33406 / DSM 1761 / CIP 103989 / NBRC 15051 / NCIMB 9469 / D465), this protein is Chaperonin GroEL.